Here is an 817-residue protein sequence, read N- to C-terminus: General transcription factor 3C polypeptide 4 (817 aa).

M1 carries the N-acetylmethionine modification. Positions 1–40 (MSEADQALVGPKADEPSPPAEEKDEGGGKEAAADAAPGPS) are disordered. A Glycyl lysine isopeptide (Lys-Gly) (interchain with G-Cter in SUMO2) cross-link involves residue K221. Residues S600 and S607 each carry the phosphoserine modification. A disordered region spans residues 603-658 (LLVDSPGMGDGEDEQQEEGTSKQGTKAGLQEKSKEGDTEETPEDSLTAGGDTGGRE). A Glycyl lysine isopeptide (Lys-Gly) (interchain with G-Cter in SUMO2) cross-link involves residue K624. Residue S647 is modified to Phosphoserine.

This sequence belongs to the TFIIIC subunit 4 family. As to quaternary structure, part of the TFIIIC subcomplex TFIIIC2, consisting of six subunits, GTF3C1, GTF3C2, GTF3C3, GTF3C4, GTF3C5 and GTF3C6. Interacts with BRF1, GTF3C1, GTF3C2, GTF3C5, GTF3C6, POLR3C and POLR3F.

The protein resides in the nucleus. The catalysed reaction is L-lysyl-[protein] + acetyl-CoA = N(6)-acetyl-L-lysyl-[protein] + CoA + H(+). Functionally, essential for RNA polymerase III to make a number of small nuclear and cytoplasmic RNAs, including 5S RNA, tRNA, and adenovirus-associated (VA) RNA of both cellular and viral origin. Has histone acetyltransferase activity (HAT) with unique specificity for free and nucleosomal H3. May cooperate with GTF3C5 in facilitating the recruitment of TFIIIB and RNA polymerase through direct interactions with BRF1, POLR3C and POLR3F. May be localized close to the A box. The polypeptide is General transcription factor 3C polypeptide 4 (Gtf3c4) (Mus musculus (Mouse)).